The sequence spans 226 residues: Ribonuclease 3 (226 aa).

The region spanning 6 to 128 is the RNase III domain; the sequence is INRLQRKLGY…LIGGIFLDSD (123 aa). Glu-41 provides a ligand contact to Mg(2+). Asp-45 is a catalytic residue. Residues Asp-114 and Glu-117 each coordinate Mg(2+). Glu-117 is an active-site residue. Positions 155–225 constitute a DRBM domain; the sequence is DPKTRLQEYL…AEQALKQLEL (71 aa).

It belongs to the ribonuclease III family. As to quaternary structure, homodimer. Mg(2+) serves as cofactor.

It is found in the cytoplasm. It carries out the reaction Endonucleolytic cleavage to 5'-phosphomonoester.. Digests double-stranded RNA. Involved in the processing of primary rRNA transcript to yield the immediate precursors to the large and small rRNAs (23S and 16S). Processes some mRNAs, and tRNAs when they are encoded in the rRNA operon. Processes pre-crRNA and tracrRNA of type II CRISPR loci if present in the organism. This Yersinia enterocolitica serotype O:8 / biotype 1B (strain NCTC 13174 / 8081) protein is Ribonuclease 3.